The chain runs to 294 residues: Cell division protein ZipA (294 aa).

A topological domain (periplasmic) is located at residue Met1. The chain crosses the membrane as a helical span at residues 2–22 (EIGLREWLILIGIIVIAGILF). Over 23-294 (DGWRRMRGGK…FERRALTQKR (272 aa)) the chain is Cytoplasmic. The interval 47–107 (PDEEGSAEVL…GKRAAEMQPQ (61 aa)) is disordered. The segment covering 82 to 91 (AREREREQKP) has biased composition (basic and acidic residues).

This sequence belongs to the ZipA family. As to quaternary structure, interacts with FtsZ via their C-terminal domains.

It localises to the cell inner membrane. Essential cell division protein that stabilizes the FtsZ protofilaments by cross-linking them and that serves as a cytoplasmic membrane anchor for the Z ring. Also required for the recruitment to the septal ring of downstream cell division proteins. In Pseudomonas putida (strain W619), this protein is Cell division protein ZipA.